Reading from the N-terminus, the 95-residue chain is Large ribosomal subunit protein bL25 (95 aa).

Belongs to the bacterial ribosomal protein bL25 family. As to quaternary structure, part of the 50S ribosomal subunit; part of the 5S rRNA/L5/L18/L25 subcomplex. Contacts the 5S rRNA. Binds to the 5S rRNA independently of L5 and L18.

Functionally, this is one of the proteins that binds to the 5S RNA in the ribosome where it forms part of the central protuberance. This Haemophilus influenzae (strain PittGG) protein is Large ribosomal subunit protein bL25.